Consider the following 135-residue polypeptide: ATP synthase epsilon chain (135 aa).

The protein belongs to the ATPase epsilon chain family. As to quaternary structure, F-type ATPases have 2 components, CF(1) - the catalytic core - and CF(0) - the membrane proton channel. CF(1) has five subunits: alpha(3), beta(3), gamma(1), delta(1), epsilon(1). CF(0) has three main subunits: a, b and c.

It is found in the cell inner membrane. Produces ATP from ADP in the presence of a proton gradient across the membrane. The sequence is that of ATP synthase epsilon chain from Rhizobium johnstonii (strain DSM 114642 / LMG 32736 / 3841) (Rhizobium leguminosarum bv. viciae).